The primary structure comprises 447 residues: Serine/threonine-protein phosphatase 2A 55 kDa regulatory subunit B gamma isoform (447 aa).

7 WD repeats span residues 22 to 61, 87 to 128, 171 to 209, 220 to 260, 279 to 317, 334 to 375, and 410 to 446; these read TEADVISTVEFNHTGELLATGDKGGRVVIFQREPESKNAP, EIEE…KRPE, GHTYHINSISVNSDCETYMSADDLRINLWHLAITDRSFN, DLTE…LCDK, EIISSVSDVKFSHSGRYMLTRDYLTVKVWDLNMEARPIE, ESDC…DVTL, and DFTKKILHTAWHPAENIIAIAATNNLYIFQDKVNSDM.

It belongs to the phosphatase 2A regulatory subunit B family. In terms of assembly, PP2A consists of a common heterodimeric core enzyme, composed of a 36 kDa catalytic subunit (subunit C) and a 65 kDa constant regulatory subunit (PR65 or subunit A), that associates with a variety of regulatory subunits. Proteins that associate with the core dimer include three families of regulatory subunits B (the R2/B/PR55/B55, R3/B''/PR72/PR130/PR59 and R5/B'/B56 families), the 48 kDa variable regulatory subunit, viral proteins, and cell signaling molecules. Interacts with IER5.

In terms of biological role, the B regulatory subunit might modulate substrate selectivity and catalytic activity, and might also direct the localization of the catalytic enzyme to a particular subcellular compartment. This chain is Serine/threonine-protein phosphatase 2A 55 kDa regulatory subunit B gamma isoform (Ppp2r2c), found in Mus musculus (Mouse).